A 152-amino-acid chain; its full sequence is Psoriasis susceptibility 1 candidate gene 1 protein (152 aa).

A compositionally biased stretch (polar residues) spans 1 to 31 (MTCTDQKSHSQRALGTQTPALQGPQLLNTDP). The disordered stretch occupies residues 1–42 (MTCTDQKSHSQRALGTQTPALQGPQLLNTDPSSEETRPPHVN).

Expressed in skin. Also found in heart, placenta, liver, skeletal muscle and pancreas.

In Homo sapiens (Human), this protein is Psoriasis susceptibility 1 candidate gene 1 protein (PSORS1C1).